The primary structure comprises 403 residues: Exodeoxyribonuclease 7 large subunit (403 aa).

The protein belongs to the XseA family. Heterooligomer composed of large and small subunits.

The protein localises to the cytoplasm. The catalysed reaction is Exonucleolytic cleavage in either 5'- to 3'- or 3'- to 5'-direction to yield nucleoside 5'-phosphates.. In terms of biological role, bidirectionally degrades single-stranded DNA into large acid-insoluble oligonucleotides, which are then degraded further into small acid-soluble oligonucleotides. The sequence is that of Exodeoxyribonuclease 7 large subunit from Streptomyces griseus subsp. griseus (strain JCM 4626 / CBS 651.72 / NBRC 13350 / KCC S-0626 / ISP 5235).